We begin with the raw amino-acid sequence, 446 residues long: Acyl-lipid (8-3)-desaturase (446 aa).

The region spanning 6 to 82 is the Cytochrome b5 heme-binding domain; the sequence is GKTFTWEELA…MKKYYVGTLV (77 aa). 2 residues coordinate heme: His-41 and His-64. Helical transmembrane passes span 125 to 145 and 150 to 170; these read ALIFGSLIASYYAQLFVPFVV and LQVVFAIIMGFACAQVGLNPL. The Histidine box-1 signature appears at 171–175; that stretch reads HDASH. A Histidine box-2 motif is present at residues 207 to 212; sequence HMLGHH. A Histidine box-3 motif is present at residues 387–391; it reads QAVHH.

The protein belongs to the fatty acid desaturase type 1 family. Fe(2+) is required as a cofactor.

It is found in the membrane. The enzyme catalyses an (8Z,11Z,14Z)-icosatrienoyl-containing glycerolipid + 2 Fe(II)-[cytochrome b5] + O2 + 2 H(+) = (5Z,8Z,11Z,14Z)-eicosatetraenoyl-containing glycerolipid + 2 Fe(III)-[cytochrome b5] + 2 H2O. The catalysed reaction is an (8Z,11Z,14Z,17Z)-eicosatetraenoyl-containing glycerolipid + 2 Fe(II)-[cytochrome b5] + O2 + 2 H(+) = a (5Z,8Z,11Z,14Z,17Z)-eicosapentaenoyl-containing glycerolipid + 2 Fe(III)-[cytochrome b5] + 2 H2O. Its function is as follows. Fatty acid desaturase that introduces a cis double bond at the 5-position in 20-carbon polyunsaturated fatty acids incorporated in a glycerolipid that contain a Delta(8) double bond. Involved in the conversion of di-homo-Delta-linolenic acid to arachidonic acid. Essential in the production of eicosanoids. This chain is Acyl-lipid (8-3)-desaturase (DES1), found in Mortierella alpina (Oleaginous fungus).